A 322-amino-acid polypeptide reads, in one-letter code: tRNA uridine(34) hydroxylase (322 aa).

The 95-residue stretch at 126 to 220 (LAEDTVVIDA…YGKDPEVKGE (95 aa)) folds into the Rhodanese domain. Catalysis depends on Cys-180, which acts as the Cysteine persulfide intermediate.

Belongs to the TrhO family.

The catalysed reaction is uridine(34) in tRNA + AH2 + O2 = 5-hydroxyuridine(34) in tRNA + A + H2O. In terms of biological role, catalyzes oxygen-dependent 5-hydroxyuridine (ho5U) modification at position 34 in tRNAs. The chain is tRNA uridine(34) hydroxylase from Shouchella clausii (strain KSM-K16) (Alkalihalobacillus clausii).